Reading from the N-terminus, the 217-residue chain is HTH-type transcriptional regulator EthR (217 aa).

The tract at residues 1–22 (MTTASQTRTPRGRRSARPSGDD) is disordered. In terms of domain architecture, HTH tetR-type spans 21-81 (DDREAAILAT…SLIDPLIKRA (61 aa)). A DNA-binding region (H-T-H motif) is located at residues 44-63 (SVDDLAKGAGISRPTFYFYF).

As to quaternary structure, homodimer.

Its function is as follows. Involved in the repression of teh monooxygenase EthA which is responsible of the formation of the active metabolite of ethionamide (ETH). This chain is HTH-type transcriptional regulator EthR (ethR), found in Mycolicibacterium smegmatis (strain ATCC 700084 / mc(2)155) (Mycobacterium smegmatis).